Here is a 432-residue protein sequence, read N- to C-terminus: Gamma-glutamyl phosphate reductase (432 aa).

It belongs to the gamma-glutamyl phosphate reductase family.

It localises to the cytoplasm. The catalysed reaction is L-glutamate 5-semialdehyde + phosphate + NADP(+) = L-glutamyl 5-phosphate + NADPH + H(+). The protein operates within amino-acid biosynthesis; L-proline biosynthesis; L-glutamate 5-semialdehyde from L-glutamate: step 2/2. Its function is as follows. Catalyzes the NADPH-dependent reduction of L-glutamate 5-phosphate into L-glutamate 5-semialdehyde and phosphate. The product spontaneously undergoes cyclization to form 1-pyrroline-5-carboxylate. This chain is Gamma-glutamyl phosphate reductase, found in Methylorubrum populi (strain ATCC BAA-705 / NCIMB 13946 / BJ001) (Methylobacterium populi).